Consider the following 695-residue polypeptide: MEKNDKDPDHDDKSKGDEKGDVVSDAHPSDDAHHQDGISNENVDVVGNAETDHQDPGDNNVDKVSQGEEAPEIRQTLESLSEELDQFLPTLSLHMEEHKDSTEEKGEDGYFQIPQFVGKFLDLFEEKLSKYDSGEPKTVWYQDPEEVSSLLEAVDRVSKLMGLLLNTKSCLDHHESLINHAGSIQQRAMAFLEDEFRIILEESVTKESVVVTDDSNSQRRSTADQQDHQNDVVVSQDHDQMLVPECGDQEIEYPGYPEDVVVVLRKIAEKMKAGGYGWECREVYLVGRRNILMRTLKQDCEFEKVSIDEVQKMSWDTLEREIPIWNKTFKDCSSLFFPGELKLAERIFPGDEGNLFCIVTHGLAIQFLGFAEAVAMTRRSTEKLFKILDIYETLRDSFPAMEELFPEELRSELRNEVTSARSRLGETAIHIFCDLEHSIKSDSSKTPVPGGAVHPLTRYTMNYLKYSCEYKDTLEQVFKSHSKMEREEEEPVESGNSAFASQLMRIMELLDGNLETKSKQYKDIPLSCIFMMNNGRYIVQKIKGSAEIHEVMGDTWCRRRSSELRNYHKNYQRETWGKLLGFLGHEGLMHNGKIVKPNLKERFKSFNATFDEIHKTQTTWVVNDEQLQSELRVSITAVMIPAYRAFMARFGQYLDPGRQTEKYVKYQPEDIEDLIDQLFEGNTSSSSTATARRRT.

The segment covering Met-1–Asp-36 has biased composition (basic and acidic residues). Disordered stretches follow at residues Met-1–Pro-71 and Val-210–Gln-229. Thr-212 is modified (phosphothreonine). 2 positions are modified to phosphoserine: Ser-215 and Ser-217. A Phosphothreonine modification is found at Thr-446. A phosphoserine mark is found at Ser-494 and Ser-605.

It belongs to the EXO70 family. As to quaternary structure, interacts with ROH1A and ROH1D independently of its phosphorylation status. Phosphorylation on Ser and Thr residues promotes its ability to repress pollen tube growth and to regulate cellular architecture at the pollen tube tip. In terms of tissue distribution, expressed in anthers, pollen and root trichoblast cells. Also observed in anther tapetum.

The protein localises to the cytoplasm. Required for optimal tip growth of pollen tube; dose-dependent negative regulator of exocyst function in pollen tube growth and cellular architecture at the pollen tube tip, probably by modulating membrane trafficking and exocytosis dynamics. The polypeptide is Exocyst complex component EXO70C2 (Arabidopsis thaliana (Mouse-ear cress)).